The chain runs to 337 residues: Cysteine proteinase 3 (337 aa).

The first 21 residues, 1–21, serve as a signal peptide directing secretion; that stretch reads MRLSITLIFTLIVLSISFISA. A propeptide spans 22-120 (activation peptide); that stretch reads GNVFSHKQYQ…GLRLNRPQFK (99 aa). 3 cysteine pairs are disulfide-bonded: Cys-142–Cys-185, Cys-176–Cys-219, and Cys-277–Cys-326. Cys-145 is an active-site residue. Residues His-284 and Asn-304 contribute to the active site.

Belongs to the peptidase C1 family.

The protein resides in the lysosome. This chain is Cysteine proteinase 3 (cprC), found in Dictyostelium discoideum (Social amoeba).